We begin with the raw amino-acid sequence, 260 residues long: Activator of 90 kDa heat shock protein ATPase homolog 2 (260 aa).

It belongs to the AHA1 family.

In terms of biological role, co-chaperone that stimulates HSP90 ATPase activity. The polypeptide is Activator of 90 kDa heat shock protein ATPase homolog 2 (AHSA2) (Bos taurus (Bovine)).